The chain runs to 59 residues: Conotoxin reg3.15 (59 aa).

An N-terminal signal peptide occupies residues 1–15; the sequence is RVLLTICLLLFPLTA. A propeptide spanning residues 16-44 is cleaved from the precursor; the sequence is IPLGGDQPAERMRNVRSAVQDPRFDSVGW. Disulfide bonds link Cys45–Cys59, Cys46–Cys55, and Cys51–Cys58.

This sequence belongs to the conotoxin M superfamily. Expressed by the venom duct.

The protein resides in the secreted. This is Conotoxin reg3.15 from Conus regius (Crown cone).